The chain runs to 156 residues: ATP synthase subunit b (156 aa).

Residues 7–27 (LFAQLVVFFILAWFTMKFVWP) traverse the membrane as a helical segment.

Belongs to the ATPase B chain family. F-type ATPases have 2 components, F(1) - the catalytic core - and F(0) - the membrane proton channel. F(1) has five subunits: alpha(3), beta(3), gamma(1), delta(1), epsilon(1). F(0) has four main subunits: a(1), b(2) and c(10-14). The alpha and beta chains form an alternating ring which encloses part of the gamma chain. F(1) is attached to F(0) by a central stalk formed by the gamma and epsilon chains, while a peripheral stalk is formed by the delta and b chains.

It localises to the cell inner membrane. F(1)F(0) ATP synthase produces ATP from ADP in the presence of a proton or sodium gradient. F-type ATPases consist of two structural domains, F(1) containing the extramembraneous catalytic core and F(0) containing the membrane proton channel, linked together by a central stalk and a peripheral stalk. During catalysis, ATP synthesis in the catalytic domain of F(1) is coupled via a rotary mechanism of the central stalk subunits to proton translocation. Functionally, component of the F(0) channel, it forms part of the peripheral stalk, linking F(1) to F(0). The chain is ATP synthase subunit b from Methylibium petroleiphilum (strain ATCC BAA-1232 / LMG 22953 / PM1).